The following is a 551-amino-acid chain: uncharacterized protein (551 aa).

The transit peptide at 1-36 directs the protein to the mitochondrion; that stretch reads MMALVRDRRAHYVMSIVIRWVHCFSSSLRGTFGTRW. The stretch at 203 to 315 forms a coiled coil; the sequence is TNILLRKLKE…MDSRDRLREE (113 aa). Residues 354–389 are disordered; that stretch reads REASLSPWPKSPPSTTALRPHSATMSVSSAGAQKAK. Polar residues predominate over residues 366–384; the sequence is PSTTALRPHSATMSVSSAG. The stretch at 405–439 forms a coiled coil; it reads KHGLESQIEALKANLENEKKKVERFRKEADRLNKS. The segment at 519–551 is disordered; sequence LQLSPKGKLSESPKEESLEEPSMRQSSPAETVD. Residues 541-551 show a composition bias toward polar residues; that stretch reads MRQSSPAETVD.

In terms of assembly, interacts with NOD2.

The protein localises to the mitochondrion. This is an uncharacterized protein from Homo sapiens (Human).